We begin with the raw amino-acid sequence, 280 residues long: Diaminopimelate epimerase (280 aa).

Residues N13 and N67 each contribute to the substrate site. C76 functions as the Proton donor in the catalytic mechanism. Residues 77–78, N191, and 208–209 contribute to the substrate site; these read GN and ER. C218 acts as the Proton acceptor in catalysis. A substrate-binding site is contributed by 219 to 220; the sequence is GT.

This sequence belongs to the diaminopimelate epimerase family. In terms of assembly, homodimer.

The protein localises to the cytoplasm. The enzyme catalyses (2S,6S)-2,6-diaminopimelate = meso-2,6-diaminopimelate. It functions in the pathway amino-acid biosynthesis; L-lysine biosynthesis via DAP pathway; DL-2,6-diaminopimelate from LL-2,6-diaminopimelate: step 1/1. Catalyzes the stereoinversion of LL-2,6-diaminopimelate (L,L-DAP) to meso-diaminopimelate (meso-DAP), a precursor of L-lysine. The protein is Diaminopimelate epimerase of Archaeoglobus fulgidus (strain ATCC 49558 / DSM 4304 / JCM 9628 / NBRC 100126 / VC-16).